The primary structure comprises 483 residues: Dual specificity protein kinase CLK1 (483 aa).

The disordered stretch occupies residues 1–49; the sequence is MRHSKRTYCPDWDERDWDYGTWRSSSSHKRKKRSHSSAREQKRCRYDHS. A compositionally biased stretch (basic residues) spans 26–36; the sequence is SSHKRKKRSHS. The Nuclear localization signal signature appears at 29–33; sequence KRKKR. Over residues 37 to 49 the composition is skewed to basic and acidic residues; it reads SAREQKRCRYDHS. Ser-61 is modified (phosphoserine). A compositionally biased stretch (low complexity) spans 84–111; that stretch reads EPGHPYGEPGSRYQMHSSKSSGRSGRSS. Residues 84-146 are disordered; the sequence is EPGHPYGEPG…SRSVEDDEEG (63 aa). Residues 112–137 are compositionally biased toward basic residues; that stretch reads YKSKHRSRHHTSQHHSHGKSHRRKRS. Ser-139 carries the post-translational modification Phosphoserine. A Protein kinase domain is found at 160-476; sequence YEIVDTLGEG…LKEALKHPFF (317 aa). ATP is bound by residues 166-174 and Lys-190; that span reads LGEGAFGKV. Asp-287 serves as the catalytic Proton acceptor.

This sequence belongs to the protein kinase superfamily. CMGC Ser/Thr protein kinase family. Lammer subfamily. In terms of assembly, interacts with PPIG and UBL5. In terms of processing, autophosphorylates on all three types of residues.

It localises to the nucleus. The enzyme catalyses L-seryl-[protein] + ATP = O-phospho-L-seryl-[protein] + ADP + H(+). The catalysed reaction is L-threonyl-[protein] + ATP = O-phospho-L-threonyl-[protein] + ADP + H(+). It catalyses the reaction L-tyrosyl-[protein] + ATP = O-phospho-L-tyrosyl-[protein] + ADP + H(+). Its activity is regulated as follows. Regulates splicing of its own pre-mRNA according to its kinase activity; increased expression of the catalytically active form influences splicing to generate the catalytically inactive splicing variant lacking the kinase domain. Leucettine L41 inhibits its kinase activity and affects the regulation of alternative splicing mediated by phosphorylation of SR proteins. Dual specificity kinase acting on both serine/threonine and tyrosine-containing substrates. Phosphorylates serine- and arginine-rich (SR) proteins of the spliceosomal complex and may be a constituent of a network of regulatory mechanisms that enable SR proteins to control RNA splicing. Phosphorylates: SRSF1, SRSF3 and PTPN1. Regulates the alternative splicing of tissue factor (F3) pre-mRNA in endothelial cells. The chain is Dual specificity protein kinase CLK1 from Mus musculus (Mouse).